The chain runs to 93 residues: YcgL domain-containing protein VFMJ11_1829 (93 aa).

One can recognise a YcgL domain in the interval 1 to 84 (MFCSIYKSTK…PPENLLEKYK (84 aa)).

In Aliivibrio fischeri (strain MJ11) (Vibrio fischeri), this protein is YcgL domain-containing protein VFMJ11_1829.